The following is a 272-amino-acid chain: Indole-3-glycerol phosphate synthase (272 aa).

This sequence belongs to the TrpC family.

The catalysed reaction is 1-(2-carboxyphenylamino)-1-deoxy-D-ribulose 5-phosphate + H(+) = (1S,2R)-1-C-(indol-3-yl)glycerol 3-phosphate + CO2 + H2O. The protein operates within amino-acid biosynthesis; L-tryptophan biosynthesis; L-tryptophan from chorismate: step 4/5. The chain is Indole-3-glycerol phosphate synthase from Mycolicibacterium paratuberculosis (strain ATCC BAA-968 / K-10) (Mycobacterium paratuberculosis).